Here is a 213-residue protein sequence, read N- to C-terminus: Gas vesicle protein F (213 aa).

This sequence belongs to the gas vesicle GvpF/GvpL family. As to quaternary structure, binds GvpA.

It localises to the gas vesicle. Its function is as follows. A minor component of the gas vesicle, may be involved in preventing GvpA aggregation during gas vesicle nucleation. Gas vesicles are hollow, gas filled proteinaceous nanostructures found in some microorganisms. They allow positioning of halobacteria at the optimal depth for growth in the poorly aerated, shallow brine pools of their habitat. Functionally, expression of a 9.5 kb mc-vac DNA fragment containing 2 divergently transcribed regions (gvpD-gvpE-gvpF-gvpG-gvpH-gvpI-gvpJ-gvpK-gvpL-gvpM and gvpA-gvpC-gvpN-gvpO) allows H.volcanii to produce gas vesicles. The protein is Gas vesicle protein F of Haloferax mediterranei (strain ATCC 33500 / DSM 1411 / JCM 8866 / NBRC 14739 / NCIMB 2177 / R-4) (Halobacterium mediterranei).